A 1324-amino-acid chain; its full sequence is MTKFHVKLYAKAVESRKLDQIQKDFEKKFNRKIDVSVEYCYHVITQEPELISSNWEKLVTLLSHSPFETSVWKESQLHPEHGKNIEIGPRTAVKTAACTNILSIFESSGIKNVERIERGIRYLVEDDVDVNEFFEIAADKMTEAIYGNDVKFDDESHQIEKVFLIDVLESKQNLIKANEELGLALDQLDLDFYYDFFVNKVKKNPTDVELFDLAQSDSEHSRHWFFRGEIWIDDRKRDGSLMKTIRETLDSSNDNSLIAFCDNSSAIRGFESVCRLRPNDPTTVSPMIAIFPPSHLIYSAETHNFPTAVCPFQGATTGTGGRIRDIHATGRGAYEIAGTVGYSFGNLNLPGLPLPWEDETFEYPTSISEPAKIAIEASNGASDYGNKFGEPVISGFARSFGQRLENGERCEYLKPIMFSGGIGAIDKDEVRKEPCAPHQKVVKIGGPVYRIGVGGGAASSVSVQGNRENQLDFAAVQRGDAEMGGKLHRVVRACAERIGGNPLMAIHDQGAGGNGNVIKELVEGCGVTVKSDTFQLGDESISLRELWTAEYQENDAALVDASLLDALQTISKREKCHVSVVGEVEKEQRVKLLGKSGEIAVDLDTRQLGEREKKVFKLKSAPRVLKKLELPENLTVRKALKRVLMLPSVASKRYLTCKVDRSVTGLVAQQQCVGPLHTPLADVAVVALSHFDTVGGAVSLGEQPIKMLIDAEKGARMCIAETIMNLIWAPITDLKDVKMSGNWMWAAKCDGEGARLVDAVGALCRGLREIGCAIDGGKDSLSMAVTAHGEVVKSPGTLVLSAYAPCTNVTKVVNPSLKAVPGSKILWIKIGSSEEKMRLGGSALAQVYSQIGDDCPDIENFSEISKVFSIVQQLLNREELAGPLRKPIILAGHDISDGGLLTAILEMAFAGNVSIDIDIKPPNQNIKPIDILFAEECGILLEVSNPENVLHIFSEAGIKCQEIGKASAVFGPDAHVKIHVNGHLEINEKLVDLREEWELVGDRLGEFQTNPKSLKEAREVRRTCQKINYKCDFDWYYNPAFIHNEQYFSTAPRVAIIREEGSNGDREMASAFTLAGFQTFDVTMTDILAGHTLEAYRGVAFVGGFSYADVLGSAKGWAAGVQFNESVSKQFEAFRSRPDTFSYGVCNGCQLMAQLGWIGDEEQKGPTVFLDENECGRFDSSFGPVKIEKNVSIMLSGMENSVLGLWSSHGEGRFTYRNLQNFQNLKTNGQVCIRFCDDRGMTGADHGSVKLPYPWNPNGSIDDVAAICSRDGRHLAMMPHADRSFLTWQWAESSEVPWNARFDQKTVALSPWIKMFRNAYNWCL.

ATP contacts are provided by residues G314–D325, S394–F396, and A681. The Mg(2+) site is built by D682, E721, N725, and D894. S896 serves as a coordination point for ATP. Residues R1053 to E1295 enclose the Glutamine amidotransferase type-1 domain. The active-site Nucleophile is the C1146. Residues H1280 and D1282 contribute to the active site.

In the N-terminal section; belongs to the FGAMS family.

Its subcellular location is the cytoplasm. It carries out the reaction N(2)-formyl-N(1)-(5-phospho-beta-D-ribosyl)glycinamide + L-glutamine + ATP + H2O = 2-formamido-N(1)-(5-O-phospho-beta-D-ribosyl)acetamidine + L-glutamate + ADP + phosphate + H(+). It functions in the pathway purine metabolism; IMP biosynthesis via de novo pathway; 5-amino-1-(5-phospho-D-ribosyl)imidazole from N(2)-formyl-N(1)-(5-phospho-D-ribosyl)glycinamide: step 1/2. In terms of biological role, phosphoribosylformylglycinamidine synthase involved in the purines biosynthetic pathway. Catalyzes the ATP-dependent conversion of formylglycinamide ribonucleotide (FGAR) and glutamine to yield formylglycinamidine ribonucleotide (FGAM) and glutamate. In Caenorhabditis elegans, this protein is Probable phosphoribosylformylglycinamidine synthase.